We begin with the raw amino-acid sequence, 532 residues long: Telomerase Cajal body protein 1 (532 aa).

The disordered stretch occupies residues 1 to 48; it reads MKTSEELRLAPDSLPSDLVPAPVLQASPADKNTDSEPVPPPCGGDDQL. 3 positions are modified to phosphoserine: Ser-27, Ser-61, and Ser-83. The tract at residues 83 to 115 is disordered; it reads SPRIEEQEVPENASLPVEETNRPELESGEAMEG. 6 WD repeats span residues 151–190, 206–251, 256–297, 307–348, 349–389, and 395–434; these read RSEN…YSES, EGDT…LRAS, NHLD…RDCE, GQSG…ALLG, GHQG…HLLW, and VTTN…SDCK. Thr-474 carries the phosphothreonine modification. At Ser-476 the chain carries Phosphoserine. Residues 505–532 are disordered; it reads CGGGPDPSNPDEDQDEKGQGRTEAVGMS.

Belongs to the TCAB1 family. Component of the telomerase holoenzyme complex composed of one molecule of TERT, one molecule of WRAP53/TCAB1, two molecules of H/ACA ribonucleoprotein complex subunits DKC1, NOP10, NHP2 and GAR1, and a telomerase RNA template component (TERC). The telomerase holoenzyme complex is associated with TEP1, SMG6/EST1A and POT1. Interacts with the chaperonin-containing T-complex (TRiC) complex; which mediates the folding of WRAP53/TCAB1. Interacts with COIL. Interacts with SMN1. Interacts with RNF8. Interacts with histone H2AX. In terms of processing, phosphorylated at Ser-61 by ATM in response to DNA damage, promoting its interaction with histone H2AX and localization to sites of DNA double-strand breaks.

It localises to the nucleus. The protein localises to the cajal body. Its subcellular location is the chromosome. The protein resides in the telomere. Functionally, RNA chaperone that plays a key role in telomere maintenance and RNA localization to Cajal bodies. Specifically recognizes and binds the Cajal body box (CAB box) present in both small Cajal body RNAs (scaRNAs) and telomerase RNA template component (TERC). Essential component of the telomerase holoenzyme complex, a ribonucleoprotein complex essential for the replication of chromosome termini that elongates telomeres in most eukaryotes. In the telomerase holoenzyme complex, required to stimulate the catalytic activity of the complex. Acts by specifically binding the CAB box of the TERC RNA and controlling the folding of the CR4/CR5 region of the TERC RNA, a critical step for telomerase activity. In addition, also controls telomerase holoenzyme complex localization to Cajal body. During S phase, required for delivery of TERC to telomeres during S phase and for telomerase activity. In addition to its role in telomere maintenance, also required for Cajal body formation, probably by mediating localization of scaRNAs to Cajal bodies. Also plays a role in DNA repair: phosphorylated by ATM in response to DNA damage and relocalizes to sites of DNA double-strand breaks to promote the repair of DNA double-strand breaks. Acts by recruiting the ubiquitin ligase RNF8 to DNA breaks and promote both homologous recombination (HR) and non-homologous end joining (NHEJ). This Rattus norvegicus (Rat) protein is Telomerase Cajal body protein 1.